A 446-amino-acid chain; its full sequence is GTPase Der (446 aa).

2 EngA-type G domains span residues 3–168 and 181–354; these read PVIA…YAGQ and IKIA…KAAM. Residues 9–16, 57–61, 120–123, 187–194, 234–238, and 299–302 each bind GTP; these read GRPNVGKS, DTGGF, NKAE, DTAGL, and NKWD. Residues 355-439 enclose the KH-like domain; the sequence is SKLPTPKLTR…PLRIEFRSST (85 aa).

Belongs to the TRAFAC class TrmE-Era-EngA-EngB-Septin-like GTPase superfamily. EngA (Der) GTPase family. As to quaternary structure, associates with the 50S ribosomal subunit.

Its function is as follows. GTPase that plays an essential role in the late steps of ribosome biogenesis. This is GTPase Der from Paraburkholderia phymatum (strain DSM 17167 / CIP 108236 / LMG 21445 / STM815) (Burkholderia phymatum).